Here is a 193-residue protein sequence, read N- to C-terminus: Ion-translocating oxidoreductase complex subunit A (193 aa).

The next 6 helical transmembrane spans lie at leucine 5–leucine 25, isoleucine 39–isoleucine 59, isoleucine 63–valine 83, valine 102–leucine 122, isoleucine 134–methionine 154, and serine 171–valine 191.

Belongs to the NqrDE/RnfAE family. In terms of assembly, the complex is composed of six subunits: RnfA, RnfB, RnfC, RnfD, RnfE and RnfG.

Its subcellular location is the cell inner membrane. Its function is as follows. Part of a membrane-bound complex that couples electron transfer with translocation of ions across the membrane. This Aliivibrio salmonicida (strain LFI1238) (Vibrio salmonicida (strain LFI1238)) protein is Ion-translocating oxidoreductase complex subunit A.